The chain runs to 357 residues: Fructose-bisphosphate aldolase, cytoplasmic isozyme (357 aa).

Substrate contacts are provided by Arg53 and Lys142. The Proton acceptor role is filled by Glu183. Lys225 (schiff-base intermediate with dihydroxyacetone-P) is an active-site residue.

It belongs to the class I fructose-bisphosphate aldolase family.

It localises to the cytoplasm. The enzyme catalyses beta-D-fructose 1,6-bisphosphate = D-glyceraldehyde 3-phosphate + dihydroxyacetone phosphate. It participates in carbohydrate degradation; glycolysis; D-glyceraldehyde 3-phosphate and glycerone phosphate from D-glucose: step 4/4. The chain is Fructose-bisphosphate aldolase, cytoplasmic isozyme from Spinacia oleracea (Spinach).